A 350-amino-acid chain; its full sequence is LIM domain-containing protein unc-95 (350 aa).

The span at 1–37 (MTISPQPSHQQFESYQWTTESRSSQQRHGTGTPSQDG) shows a compositional bias: polar residues. Positions 1 to 65 (MTISPQPSHQ…ESRNSNKDKV (65 aa)) are disordered. Positions 45-65 (PVERHVARWRSESRNSNKDKV) are enriched in basic and acidic residues. The stretch at 83–110 (LTALKNDVEQTTEIIRRKQEQMRMERRQ) forms a coiled coil. Disordered regions lie at residues 177-198 (RRGQ…EIEY), 206-225 (PEEQ…METD), and 235-262 (MSEE…SGSP). Positions 268–334 (AVCAYCSEEI…HDCFYKLYNG (67 aa)) constitute an LIM zinc-binding domain.

Ubiquitinated. Ubiquitination by rnf-5 leads to dissociation from muscle dense bodies during molting and is required for ecdysis. As to expression, expressed in the body wall muscles, vulval muscles and the anal muscles. Expressed in the muscle arms of the head muscle cells that form neuromuscular junctions and in the anal depressor muscle.

It is found in the cytoplasm. It localises to the nucleus. Its subcellular location is the cell membrane. The protein resides in the myofibril. The protein localises to the sarcomere. It is found in the m line. It localises to the cell junction. Its subcellular location is the focal adhesion. Functionally, required for the assembly and integrity of muscle dense bodies, which establish the adhesion sites of the muscle cells to the extracellular matrix. Decreased localization of unc-95 to dense bodies and their subsequent dissociation plays an important role in ecdysis during molting. Involved in the organization of the muscle sarcomeric structure and thereby required for locomotion. The sequence is that of LIM domain-containing protein unc-95 from Caenorhabditis elegans.